The primary structure comprises 657 residues: Threonine--tRNA ligase (657 aa).

One can recognise a TGS domain in the interval 1-70 (MSDHKESTGA…NSDAAIEIIT (70 aa)). A catalytic region spans residues 253 to 555 (DHRKLGAELE…LIEHTAGNFP (303 aa)). Positions 351, 402, and 532 each coordinate Zn(2+).

This sequence belongs to the class-II aminoacyl-tRNA synthetase family. In terms of assembly, homodimer. Zn(2+) serves as cofactor.

It is found in the cytoplasm. The catalysed reaction is tRNA(Thr) + L-threonine + ATP = L-threonyl-tRNA(Thr) + AMP + diphosphate + H(+). Catalyzes the attachment of threonine to tRNA(Thr) in a two-step reaction: L-threonine is first activated by ATP to form Thr-AMP and then transferred to the acceptor end of tRNA(Thr). Also edits incorrectly charged L-seryl-tRNA(Thr). In Chlorobium chlorochromatii (strain CaD3), this protein is Threonine--tRNA ligase.